The chain runs to 224 residues: 4'-phosphopantetheinyl transferase Sfp (224 aa).

3 residues coordinate Mg(2+): Asp-107, Glu-109, and Glu-151. The peptidyl carrier protein binding stretch occupies residues 158–189 (GKGLSLPLDSFSVRLHQDGQVSIELPDSHSPC).

The protein belongs to the P-Pant transferase superfamily. Gsp/Sfp/HetI/AcpT family. Monomer in solution. Requires Mg(2+) as cofactor.

The catalysed reaction is apo-[ACP] + CoA = holo-[ACP] + adenosine 3',5'-bisphosphate + H(+). In terms of biological role, activates the seven peptidyl carrier protein (PCP) domains of the first three subunits (SrfAA, SrfAB and SrfAC) of surfactin synthetase by transferring the 4'-phosphopantetheinyl moiety of coenzyme A (CoA) to a serine residue. Required for cells of B.subtilis to become producers of the lipopeptide antibiotics surfactin and plipastatin B1. This chain is 4'-phosphopantetheinyl transferase Sfp (sfp), found in Bacillus subtilis (strain 168).